Here is a 79-residue protein sequence, read N- to C-terminus: Small ribosomal subunit protein bS16 (79 aa).

Belongs to the bacterial ribosomal protein bS16 family.

This chain is Small ribosomal subunit protein bS16, found in Desulfovibrio desulfuricans (strain ATCC 27774 / DSM 6949 / MB).